The sequence spans 356 residues: Geranylgeranyl pyrophosphate synthase penG (356 aa).

Isopentenyl diphosphate is bound by residues lysine 83, arginine 86, and histidine 115. Mg(2+)-binding residues include aspartate 122 and aspartate 126. Residue arginine 131 coordinates dimethylallyl diphosphate. Arginine 132 contributes to the isopentenyl diphosphate binding site. Dimethylallyl diphosphate is bound by residues lysine 209, threonine 210, and glutamine 243. Aspartate 246 provides a ligand contact to Mg(2+). 3 residues coordinate dimethylallyl diphosphate: asparagine 250, lysine 260, and lysine 270.

This sequence belongs to the FPP/GGPP synthase family. Mg(2+) is required as a cofactor.

The catalysed reaction is isopentenyl diphosphate + dimethylallyl diphosphate = (2E)-geranyl diphosphate + diphosphate. The enzyme catalyses isopentenyl diphosphate + (2E)-geranyl diphosphate = (2E,6E)-farnesyl diphosphate + diphosphate. It carries out the reaction isopentenyl diphosphate + (2E,6E)-farnesyl diphosphate = (2E,6E,10E)-geranylgeranyl diphosphate + diphosphate. It functions in the pathway secondary metabolite biosynthesis. In terms of biological role, geranylgeranyl pyrophosphate synthase; part of the gene cluster that mediates the biosynthesis of the indole diterpenes penitrems. The geranylgeranyl diphosphate (GGPP) synthase ptmG catalyzes the first step in penitrem biosynthesis via conversion of farnesyl pyrophosphate and isopentyl pyrophosphate into geranylgeranyl pyrophosphate (GGPP). Condensation of indole-3-glycerol phosphate with GGPP by the prenyl transferase ptmC then forms 3-geranylgeranylindole (3-GGI). Epoxidation by the FAD-dependent monooxygenase ptmM leads to a epoxidized-GGI that is substrate of the terpene cyclase ptmB for cyclization to yield paspaline. Paspaline is subsequently converted to 13-desoxypaxilline by the cytochrome P450 monooxygenase ptmP, the latter being then converted to paxilline by the cytochrome P450 monooxygenase ptmQ. Paxilline is converted to beta-paxitriol via C-10 ketoreduction by the short-chain dehydrogenase ptmH which can be monoprenylated at the C-20 by the indole diterpene prenyltransferase ptmD. A two-step elimination (acetylation and elimination) process performed by the O-acetyltransferase ptmV and ptmI leads to the production of the prenylated form of penijanthine. The FAD-linked oxidoreductase ptmO then converts the prenylated form of penijanthine into PC-M5 which is in turn transformed into PC-M4 by the aromatic dimethylallyltransferase ptmE. Five sequential oxidative transformations performed by the cytochrome P450 monooxygenases ptmK, ptmU, ptmL, ptmN and ptmJ yield the various penitrem compounds. PtmK, ptmU and ptmM are involved in the formation of the key bicyclic ring of penitrem C via the formation of the intermediates secopenitrem D and penitrem D. PtmL catalyzes the epoxidation of penitrem D and C to yield penitrem B and F, respectively. PtmJ catalyzes the last benzylic hydroxylation to convert penitrem B to prenitrem E and penitrem F to penitrem A. This is Geranylgeranyl pyrophosphate synthase penG from Penicillium ochrochloron.